The chain runs to 238 residues: 3-dehydroquinate dehydratase (238 aa).

3-dehydroquinate contacts are provided by residues 35-37 (ELR) and R68. H131 acts as the Proton donor/acceptor in catalysis. The Schiff-base intermediate with substrate role is filled by K158. 2 residues coordinate 3-dehydroquinate: R200 and Q223.

The protein belongs to the type-I 3-dehydroquinase family. As to quaternary structure, homodimer.

It catalyses the reaction 3-dehydroquinate = 3-dehydroshikimate + H2O. It functions in the pathway metabolic intermediate biosynthesis; chorismate biosynthesis; chorismate from D-erythrose 4-phosphate and phosphoenolpyruvate: step 3/7. In terms of biological role, involved in the third step of the chorismate pathway, which leads to the biosynthesis of aromatic amino acids. Catalyzes the cis-dehydration of 3-dehydroquinate (DHQ) and introduces the first double bond of the aromatic ring to yield 3-dehydroshikimate. This is 3-dehydroquinate dehydratase from Staphylococcus epidermidis (strain ATCC 35984 / DSM 28319 / BCRC 17069 / CCUG 31568 / BM 3577 / RP62A).